A 223-amino-acid polypeptide reads, in one-letter code: All-trans retinoic acid-induced differentiation factor (223 aa).

Residues 1 to 25 (MASRESGGSRAAALLLVLGVERALA) form the signal peptide. Topologically, residues 26–193 (LPEICTLCPG…YKCMRQGSFS (168 aa)) are extracellular. In terms of domain architecture, EGF-like spans 146 to 187 (QRDLCNSTGSPEMCPENGSCASDGPGLLQCVCADGFHGYKCM). 3 disulfide bridges follow: Cys150/Cys165, Cys159/Cys175, and Cys177/Cys186. A helical membrane pass occupies residues 194 to 214 (LLMFFGILGSTTLAISILLWG). The Cytoplasmic segment spans residues 215–223 (TQRRKAKAS).

As to quaternary structure, interacts with NELL1; the interaction promotes osteoblastic differentiation and mineralization. Interacts with SLC37A3; the interaction is direct and both proteins are mutually dependent for their stability.

It is found in the nucleus envelope. The protein localises to the cell membrane. It localises to the lysosome membrane. Functionally, promotes osteoblast cell differentiation and terminal mineralization. Plays a role in inducing the cell cycle arrest via inhibiting CCND1 expression in all-trans-retinoic acid (ATRA) signal pathway. In osteoclasts, forms a transporter complex with ATRAID for nitrogen-containing-bisphophonates (N-BPs) required for releasing N-BP molecules that have trafficked to lysosomes through fluid-phase endocytosis into the cytosol. This chain is All-trans retinoic acid-induced differentiation factor (Atraid), found in Mus musculus (Mouse).